Here is a 276-residue protein sequence, read N- to C-terminus: Glutamate 5-kinase (276 aa).

Lys14 serves as a coordination point for ATP. Substrate-binding residues include Ser54, Asp141, and Asn157. ATP contacts are provided by residues 177–178 (SD) and 219–225 (TGGMLTK).

This sequence belongs to the glutamate 5-kinase family.

It is found in the cytoplasm. The catalysed reaction is L-glutamate + ATP = L-glutamyl 5-phosphate + ADP. Its pathway is amino-acid biosynthesis; L-proline biosynthesis; L-glutamate 5-semialdehyde from L-glutamate: step 1/2. Its function is as follows. Catalyzes the transfer of a phosphate group to glutamate to form L-glutamate 5-phosphate. The polypeptide is Glutamate 5-kinase (Listeria innocua serovar 6a (strain ATCC BAA-680 / CLIP 11262)).